A 444-amino-acid chain; its full sequence is MREIVHIQAGQCGNQIGAKFWEVISDEHGIDPTGTYHGDSDLQLERINVYYNEASGGKYVPRAILVDLEPGTMDSVRAGPFGTLFRPDNFIFGQSGAGNNWAKGHYTEGAELVDNVLDVVRKESESCDCLQGFQLTHSLGGGTGSGMGTLLISKIREEYPDRIMTTFSVVPSPKVSDTVVEPYNATLSVHQLVENTDETFCIDNEALYDICFRTLKLTTPTYGDLNHLVSATMSGVTTCLRFPGQLNADLRKLAVNMVPFPRLHFFMPGFAPLTSRGSQGYRALTVPELTQQMFDAKNMMAACDPRHGRYLTVAAIFRGRMSMKEVDEQMLNVQNKNNAYFVEWIPNNVKTAVCDIPPRGLKMSATFIGNSTAIQELFKRISEQFTAMFRRKAFLHWYTGEGMDEMEFTEAESNMNDLVSEYQQYQEATVEDEDFEEEGDYERE.

Glutamine 11, glutamate 69, serine 138, glycine 142, threonine 143, glycine 144, asparagine 204, and asparagine 226 together coordinate GTP. Residue glutamate 69 coordinates Mg(2+).

It belongs to the tubulin family. As to quaternary structure, dimer of alpha and beta chains. A typical microtubule is a hollow water-filled tube with an outer diameter of 25 nm and an inner diameter of 15 nM. Alpha-beta heterodimers associate head-to-tail to form protofilaments running lengthwise along the microtubule wall with the beta-tubulin subunit facing the microtubule plus end conferring a structural polarity. Microtubules usually have 13 protofilaments but different protofilament numbers can be found in some organisms and specialized cells. It depends on Mg(2+) as a cofactor.

Its subcellular location is the cytoplasm. It is found in the cytoskeleton. Tubulin is the major constituent of microtubules, a cylinder consisting of laterally associated linear protofilaments composed of alpha- and beta-tubulin heterodimers. Microtubules grow by the addition of GTP-tubulin dimers to the microtubule end, where a stabilizing cap forms. Below the cap, tubulin dimers are in GDP-bound state, owing to GTPase activity of alpha-tubulin. This Trichuris trichiura (Whipworm) protein is Tubulin beta chain.